A 471-amino-acid polypeptide reads, in one-letter code: UDP-glycosyltransferase CGT (471 aa).

Residue H24 is the Proton acceptor of the active site. H24 serves as a coordination point for an anthocyanidin. Residue D120 is the Charge relay of the active site. T143 serves as a coordination point for UDP-alpha-D-glucose. Positions 280 to 281 (SR) are UDP. Residues V343, Q345, H360, W363, N364, S365, and E368 each coordinate UDP-alpha-D-glucose. G383 contacts an anthocyanidin. UDP-alpha-D-glucose is bound by residues D384 and Q385.

The protein belongs to the UDP-glycosyltransferase family.

The enzyme catalyses a 3'-hydro-2'-hydroxy-beta-oxodihydrochalcone + UDP-alpha-D-glucose = a 3'-(beta-D-glucopyranosyl)-2'-hydroxy-beta-oxodihydrochalcone + UDP + H(+). Functionally, UDP-glucose-dependent glucosyltransferase catalyzing the c-glucosylation of 2-hydroxyflavanones. The protein is UDP-glycosyltransferase CGT of Oryza sativa subsp. japonica (Rice).